The following is a 209-amino-acid chain: Probable GTP-binding protein EngB (209 aa).

The EngB-type G domain occupies 27-201; it reads SGVEIAFAGR…ATKLDSWFAE (175 aa). GTP is bound by residues 35–42, 62–66, 80–83, 147–150, and 180–182; these read GRSNAGKS, GRTQL, DLPG, TKAD, and YSA. Positions 42 and 64 each coordinate Mg(2+).

Belongs to the TRAFAC class TrmE-Era-EngA-EngB-Septin-like GTPase superfamily. EngB GTPase family. Requires Mg(2+) as cofactor.

In terms of biological role, necessary for normal cell division and for the maintenance of normal septation. The chain is Probable GTP-binding protein EngB from Glaesserella parasuis serovar 5 (strain SH0165) (Haemophilus parasuis).